The sequence spans 324 residues: MSLEPLPGTLENLLEQTSLKWIFVGGKGGVGKTTTSCSLAIQMSKVRKSVLLISTDPAHNLSDAFGTKFGKEARLIPGFENLSAMEIDPNASIQEMLEQSEQQNPNNPMSGMMQDLAFAIPGIDEALAFAEVMKEVKSMNFDCVIFDTAPTGHTLRFLNFPTVLEKALAKLSGLTSRFGPLINQMSGMLGTNTNQEDIFAKMEGMRGSISEVNKQFKNPDLTTFVCVCISEFLSLYETERMIQELTSYEIDTHNIVVNQLLLDPDTKCPQCIARRKMQQKYLSQIEELYEDFHIVKVPQVPSEVRGTEALTKFSDLLIHPYVKE.

27-34 (KGGVGKTT) provides a ligand contact to ATP. Residue aspartate 56 is part of the active site. Positions 231 and 258 each coordinate ATP. Residues cysteine 268 and cysteine 271 each coordinate Zn(2+).

Belongs to the arsA ATPase family. Homodimer.

The protein resides in the cytoplasm. It is found in the endoplasmic reticulum. Its function is as follows. ATPase required for the post-translational delivery of tail-anchored (TA) proteins to the endoplasmic reticulum. Recognizes and selectively binds the transmembrane domain of TA proteins in the cytosol. This complex then targets to the endoplasmic reticulum by membrane-bound receptors, where the tail-anchored protein is released for insertion. This process is regulated by ATP binding and hydrolysis. ATP binding drives the homodimer towards the closed dimer state, facilitating recognition of newly synthesized TA membrane proteins. ATP hydrolysis is required for insertion. Subsequently, the homodimer reverts towards the open dimer state, lowering its affinity for the membrane-bound receptor, and returning it to the cytosol to initiate a new round of targeting. The sequence is that of ATPase get3 (get3) from Schizosaccharomyces japonicus (strain yFS275 / FY16936) (Fission yeast).